The sequence spans 450 residues: Phosphoglucosamine mutase (450 aa).

Ser-101 (phosphoserine intermediate) is an active-site residue. Residues Ser-101, Asp-240, Asp-242, and Asp-244 each contribute to the Mg(2+) site. Phosphoserine is present on Ser-101.

This sequence belongs to the phosphohexose mutase family. The cofactor is Mg(2+). Post-translationally, activated by phosphorylation.

The enzyme catalyses alpha-D-glucosamine 1-phosphate = D-glucosamine 6-phosphate. Catalyzes the conversion of glucosamine-6-phosphate to glucosamine-1-phosphate. The chain is Phosphoglucosamine mutase from Streptococcus equi subsp. zooepidemicus (strain H70).